The sequence spans 169 residues: METAEGPHLVRLYVYDMSRGLARRLSPVMLGKQLEGIWHTSIIVFDEEFFYGREGITSCLPGRTMLGEPDSVMELGITEVTEEIFLEYLSSLGESGFSGESYHLFDHNCNTFSNEVAQFLTGKKIPSYITELPSEVLSTPLGQALRPLLDSVQIQPAGGNIFNRQSGPS.

The PPPDE domain maps to 8–150; sequence HLVRLYVYDM…LGQALRPLLD (143 aa). His-39 is an active-site residue. The Nuclear export signal 1 motif lies at 84 to 92; the sequence is IFLEYLSSL. Residue Cys-109 is part of the active site. A Nuclear export signal 2 motif is present at residues 140–154; it reads PLGQALRPLLDSVQI.

Belongs to the DeSI family. As to quaternary structure, homodimer.

It is found in the cytoplasm. Its subcellular location is the nucleus. It catalyses the reaction S-hexadecanoyl-L-cysteinyl-[protein] + H2O = L-cysteinyl-[protein] + hexadecanoate + H(+). Functionally, protease which deconjugates SUMO1, SUMO2 and SUMO3 from some substrate proteins. Has isopeptidase but not SUMO-processing activity. Collaborates with ubqln4 in the export of ubiquitinated proteins from the nucleus to the cytoplasm. Exhibits palmitoyl protein thioesterase (S-depalmitoylation) activity towards synthetic substrates 4-methylumbelliferyl-6-S-palmitoyl-beta-D-glucopyranoside and S-depalmitoylation probe 5 (DPP-5). The chain is Desumoylating isopeptidase 1 from Xenopus laevis (African clawed frog).